A 653-amino-acid chain; its full sequence is MSRALLELNGVTRRFVAGEKDFIALNDINLTINAGELVAITGASGSGKSTLMNVLGCLDHPNSGSYKVDGRETGTLTDDELAELRRDHFGFIFQRYHLLPHLAAIQNVEMPAIYAGTGKGMRVERAQKLLERLGLSGHLEHRPSQLSGGQQQRVSIARALMNGGEIILADEPTGALDSVSGKEVMNILLELNSAGHTVILVTHDEKVAAHAERIIEMRDGEIIADRVNTDRPIINEKTTERLPTKPRQGNRLMANIGLFQEAFVMAWVALISHRMRTLLTMLGIIIGITSVVSIVAIGEGAKRYVLKDIQAIGSNTIEVFPGSDFGDTKSMDIQTLALSDVAALSSEYYIDSATPNIGRNLLVRYRNIDVSATVSGVSPSYFQVRGTKMGLGVGFNKDDARRQAQVVVIDHNTRIRLFGPKVDPLGQVILVGNLPCTVIGVTENKKNIFDTSKNLNIWMPYETASGRLLGQTYLDGITVRVKDGQPSKVVEDNVNKLLQKRHGTKDFFTYNLDSVMQTVQKTSQSLALLLSLIAVISLAVGGIGVMNIMLVSVTERTREIGIRMAVGARQSDIRQQFLVEAVMVCLIGGVIGISLSFVIGYVFSLLVKEWQMVFSLGSIVTAFICSTLIGIVFGFVPARNAAQLDPIEALARD.

Residues 6 to 244 (LELNGVTRRF…NEKTTERLPT (239 aa)) enclose the ABC transporter domain. Position 42 to 49 (42 to 49 (GASGSGKS)) interacts with ATP. Helical transmembrane passes span 252–272 (LMANIGLFQEAFVMAWVALIS), 278–298 (LLTMLGIIIGITSVVSIVAIG), 526–546 (LALLLSLIAVISLAVGGIGVM), 583–603 (MVCLIGGVIGISLSFVIGYVF), and 616–636 (LGSIVTAFICSTLIGIVFGFV).

Belongs to the ABC transporter superfamily. Macrolide exporter (TC 3.A.1.122) family. Probably part of a tripartite efflux system, which is composed of an inner membrane transporter, a periplasmic membrane fusion protein, and an outer membrane component.

Its subcellular location is the cell inner membrane. Probably involved in the export of syringafactins. The protein is Probable syringafactin export ATP-binding/permease protein SyfD of Pseudomonas syringae pv. syringae (strain B728a).